Consider the following 441-residue polypeptide: MAGASTSRKSYGRIFTLLRDHNKWFENSIPLIASENIPSPAVREALISDFGNRYAEGWPGERVYAGCTYIDMVETECMKLAKKLFKAEFADVRPVSGVVANLAIYSAFSDPGDVMIAPSIPAGGHISHGRKEHSGTAGLVHGLEVEFYPFDAKSMTIDVDATKAKIIDLEKAGRTPKIAMFGGSLFLFPHPVKELAEFMKGRGMHINYDGAHVAGLIAGGQFQDPIREGADTMTMSTHKTLFGPQGGLVLGRNEHAEGIKKAMFPGLTSSHHIHHMAAKAVAFTEALEFGKKYAKDVVRNAKALAESLSGLGFKVLGEDGGFTKSHQVAVNVLEYSDGGKIEARLEKANIIVNRQLIPGDIKAGRHYLHPGGIRLGVSEVTRLGMGTGEMAEIAELMKQAVTERGDPKRLASKVKSFRKPFQKVQYCFDKKLPAYEYVKLR.

Residue 124–126 (GHI) coordinates (6S)-5,6,7,8-tetrahydrofolate. Lys-239 is modified (N6-(pyridoxal phosphate)lysine).

The protein belongs to the SHMT family. Homodimer. Pyridoxal 5'-phosphate serves as cofactor.

It is found in the cytoplasm. Its pathway is amino-acid biosynthesis; glycine biosynthesis; glycine from L-serine: step 1/1. Functionally, catalyzes the reversible interconversion of serine and glycine with a modified folate serving as the one-carbon carrier. Also exhibits a pteridine-independent aldolase activity toward beta-hydroxyamino acids, producing glycine and aldehydes, via a retro-aldol mechanism. In Cenarchaeum symbiosum (strain A), this protein is Serine hydroxymethyltransferase.